The chain runs to 366 residues: L-tyrosine C(3)-methyltransferase (366 aa).

Over residues 1–12 (MTISLENTTVGQ) the composition is skewed to polar residues. The disordered stretch occupies residues 1 to 22 (MTISLENTTVGQNPAGGPPTGK). Residue glutamate 223 participates in S-adenosyl-L-methionine binding.

It belongs to the class I-like SAM-binding methyltransferase superfamily. Cation-independent O-methyltransferase family.

It catalyses the reaction L-tyrosine + S-adenosyl-L-methionine = 3-methyl-L-tyrosine + S-adenosyl-L-homocysteine + H(+). Its pathway is antibiotic biosynthesis. Its function is as follows. C-methyltransferase that mediates the methylation of tyrosine into 3-methyl-L-tyrosine (3-Me-Tyr) in biosynthesis of saframycin A, a potent antitumor antibiotic that belongs to the tetrahydroisoquinoline family. Involved in biosynthesis of 3-hydroxy-5-methyl-O-methyltyrosine (3-OH-5-Me-OMe-Tyr), a core structure of saframycin A. This chain is L-tyrosine C(3)-methyltransferase, found in Streptomyces lavendulae.